A 340-amino-acid polypeptide reads, in one-letter code: Ferrochelatase (340 aa).

Fe cation is bound by residues His-202 and Glu-283.

The protein belongs to the ferrochelatase family.

It localises to the cytoplasm. It carries out the reaction heme b + 2 H(+) = protoporphyrin IX + Fe(2+). It functions in the pathway porphyrin-containing compound metabolism; protoheme biosynthesis; protoheme from protoporphyrin-IX: step 1/1. Catalyzes the ferrous insertion into protoporphyrin IX. The polypeptide is Ferrochelatase (Acinetobacter baylyi (strain ATCC 33305 / BD413 / ADP1)).